Reading from the N-terminus, the 348-residue chain is 3',5'-cyclic-nucleotide phosphodiesterase (348 aa).

Mn(2+) is required as a cofactor.

The catalysed reaction is a nucleoside 3',5'-cyclic phosphate + H2O = a nucleoside 5'-phosphate + H(+). Functionally, hydrolyzes cAMP to 5'-AMP and cGMP to 5'-GMP. Does not show phosphohydrolase activity toward various phosphatidylcholine and phosphorylated sugars. The chain is 3',5'-cyclic-nucleotide phosphodiesterase from Helicobacter pylori (strain ATCC 700392 / 26695) (Campylobacter pylori).